The sequence spans 248 residues: Ubiquinone biosynthesis O-methyltransferase (248 aa).

Arg41, Gly72, Asp93, and Met136 together coordinate S-adenosyl-L-methionine.

This sequence belongs to the methyltransferase superfamily. UbiG/COQ3 family.

It carries out the reaction a 3-demethylubiquinol + S-adenosyl-L-methionine = a ubiquinol + S-adenosyl-L-homocysteine + H(+). The catalysed reaction is a 3-(all-trans-polyprenyl)benzene-1,2-diol + S-adenosyl-L-methionine = a 2-methoxy-6-(all-trans-polyprenyl)phenol + S-adenosyl-L-homocysteine + H(+). It functions in the pathway cofactor biosynthesis; ubiquinone biosynthesis. In terms of biological role, O-methyltransferase that catalyzes the 2 O-methylation steps in the ubiquinone biosynthetic pathway. This chain is Ubiquinone biosynthesis O-methyltransferase, found in Rhizobium johnstonii (strain DSM 114642 / LMG 32736 / 3841) (Rhizobium leguminosarum bv. viciae).